Here is a 310-residue protein sequence, read N- to C-terminus: NADH-cytochrome b5 reductase 1 (310 aa).

The chain crosses the membrane as a helical span at residues 32–52 (EWLPYAVALAAILSGGKVFSN). The 106-residue stretch at 61 to 166 (TEFQNFELKE…RGPKGAMVYT (106 aa)) folds into the FAD-binding FR-type domain. FAD contacts are provided by residues 146–161 (AGLR…GPKG) and 172–209 (KIGM…QVDL).

The protein belongs to the flavoprotein pyridine nucleotide cytochrome reductase family. In terms of assembly, monomer. Component of the 2-(3-amino-3-carboxypropyl)histidine synthase complex composed of DPH1, DPH2, DPH3 and a NADH-dependent reductase, predominantly CBR1. Requires FAD as cofactor.

The protein resides in the mitochondrion outer membrane. It catalyses the reaction 2 Fe(III)-[cytochrome b5] + NADH = 2 Fe(II)-[cytochrome b5] + NAD(+) + H(+). The catalysed reaction is 2 Fe(3+)-[Dph3] + NADH = 2 Fe(2+)-[Dph3] + NAD(+) + H(+). It functions in the pathway protein modification; peptidyl-diphthamide biosynthesis. Functionally, NADH-dependent reductase for DPH3 and cytochrome b5. Required for the first step of diphthamide biosynthesis, a post-translational modification of histidine which occurs in elongation factor 2. DPH1 and DPH2 transfer a 3-amino-3-carboxypropyl (ACP) group from S-adenosyl-L-methionine (SAM) to a histidine residue, the reaction is assisted by a reduction system comprising DPH3 and a NADH-dependent reductase, predominantly CBR1. By reducing DPH3, also involved in the formation of the tRNA wobble base modification mcm5s 2U (5-methoxycarbonylmethyl-2-thiouridine), mediated by the elongator complex. The cytochrome b5/NADH cytochrome b5 reductase electron transfer system supports the catalytic activity of several sterol biosynthetic enzymes. In Ajellomyces capsulatus (strain NAm1 / WU24) (Darling's disease fungus), this protein is NADH-cytochrome b5 reductase 1 (CBR1).